Reading from the N-terminus, the 545-residue chain is Chaperonin GroEL (545 aa).

Residues 30-33 (TLGP), lysine 51, 87-91 (DGTTT), glycine 415, and aspartate 495 contribute to the ATP site.

It belongs to the chaperonin (HSP60) family. In terms of assembly, forms a cylinder of 14 subunits composed of two heptameric rings stacked back-to-back. Interacts with the co-chaperonin GroES.

It localises to the cytoplasm. It catalyses the reaction ATP + H2O + a folded polypeptide = ADP + phosphate + an unfolded polypeptide.. Together with its co-chaperonin GroES, plays an essential role in assisting protein folding. The GroEL-GroES system forms a nano-cage that allows encapsulation of the non-native substrate proteins and provides a physical environment optimized to promote and accelerate protein folding. The chain is Chaperonin GroEL from Shewanella denitrificans (strain OS217 / ATCC BAA-1090 / DSM 15013).